Consider the following 312-residue polypeptide: R2-like ligand binding oxidase (312 aa).

Mn(2+)-binding residues include E68, E101, and H104. Positions V71–Y162 form a cross-link, 3-(O4'-tyrosyl)-valine (Val-Tyr). Position 101 (E101) interacts with Fe cation. Fe cation is bound by residues E167, E202, and H205.

This sequence belongs to the ribonucleoside diphosphate reductase small chain family. R2-like ligand binding oxidase subfamily. In terms of assembly, homodimer. Requires Fe cation as cofactor. The cofactor is Mn(2+).

Functionally, probable oxidase that might be involved in lipid metabolism. The sequence is that of R2-like ligand binding oxidase from Mycolicibacterium gilvum (strain PYR-GCK) (Mycobacterium gilvum (strain PYR-GCK)).